The primary structure comprises 353 residues: C-X-C chemokine receptor type 2 (353 aa).

Residues 1-45 (FNMESDSFEDFWKGEDLSNYSYSSALPPFLLDASPCEPESLEINK) lie on the Extracellular side of the membrane. Asparagine 19 is a glycosylation site (N-linked (GlcNAc...) asparagine). A helical transmembrane segment spans residues 46–72 (YFVVIIYALVFLLSLLGNSLVILVILY). Residues 73–81 (SRVGRSVTD) lie on the Cytoplasmic side of the membrane. The chain crosses the membrane as a helical span at residues 82–102 (VYLLNLALADLLFALTLPIWA). Topologically, residues 103–117 (ASKVNGWIFGTFLCK) are extracellular. Cysteine 116 and cysteine 193 are oxidised to a cystine. A helical membrane pass occupies residues 118-139 (VVSLLKEVNFYSGILLLACISV). Topologically, residues 140–160 (DRYLAIVHATRTLTQKRYLVK) are cytoplasmic. The chain crosses the membrane as a helical span at residues 161-180 (FICLSIWGLSLLLALPVLLF). Residues 181–205 (RRTIYPSNVSPVCYEDMGNNTANWR) are Extracellular-facing. Residues 206–228 (MLLRILPQSFGFIVPLLIMLFCY) form a helical membrane-spanning segment. Residues 229 to 248 (GFTLRTLFKAHMGQKHRAMR) lie on the Cytoplasmic side of the membrane. Residues 249 to 270 (VIFAVVLIFLLCWLPYNLVLLA) form a helical membrane-spanning segment. Residues 271–291 (DTLMRTQVIQETCERRNHINQ) are Extracellular-facing. A helical membrane pass occupies residues 292 to 312 (ALDATEILGILHSCLNPLIYA). The Cytoplasmic segment spans residues 313–353 (FIGQKFCHGLLKILAIHGLISKDSLPKDSRPSFVGSSSGHT).

The protein belongs to the G-protein coupled receptor 1 family. Interacts with IL8. Interacts with GNAI2. Post-translationally, phosphorylated upon ligand binding; which is required for desensitization.

It is found in the cell membrane. In terms of biological role, receptor for interleukin-8 which is a powerful neutrophil chemotactic factor. Binding of IL-8 to the receptor causes activation of neutrophils. This response is mediated via a G-protein that activates a phosphatidylinositol-calcium second messenger system. Binds to IL-8 with high affinity. Also binds with high affinity to CXCL3, GRO/MGSA and NAP-2. The sequence is that of C-X-C chemokine receptor type 2 (CXCR2) from Gorilla gorilla gorilla (Western lowland gorilla).